A 1008-amino-acid polypeptide reads, in one-letter code: ATP-dependent zinc metalloprotease FTSH 12, chloroplastic (1008 aa).

The N-terminal 49 residues, 1-49 (MEIAISYKPNPLISSSTQLLKRSKSFGLVRFPAKYGLGATRKKQLFRVY), are a transit peptide targeting the chloroplast. Helical transmembrane passes span 154-174 (AALFIYAFALLLSCQRVYVAI) and 427-447 (IHYFMKVFIALLPGILILWFI). 533-540 (GPPGTGKT) lines the ATP pocket. Residue His769 participates in Zn(2+) binding. The active site involves Glu770. The Zn(2+) site is built by His773 and Asp849.

This sequence in the N-terminal section; belongs to the AAA ATPase family. In the C-terminal section; belongs to the peptidase M41 family. Zn(2+) serves as cofactor.

It is found in the plastid. Its subcellular location is the chloroplast thylakoid membrane. Functionally, probable ATP-dependent zinc metallopeptidase. This chain is ATP-dependent zinc metalloprotease FTSH 12, chloroplastic (FTSH12), found in Arabidopsis thaliana (Mouse-ear cress).